A 274-amino-acid polypeptide reads, in one-letter code: 4-diphosphocytidyl-2-C-methyl-D-erythritol kinase (274 aa).

K10 is a catalytic residue. 101 to 111 (PTQAGLGGGSA) lines the ATP pocket. The active site involves D143.

This sequence belongs to the GHMP kinase family. IspE subfamily.

It carries out the reaction 4-CDP-2-C-methyl-D-erythritol + ATP = 4-CDP-2-C-methyl-D-erythritol 2-phosphate + ADP + H(+). It participates in isoprenoid biosynthesis; isopentenyl diphosphate biosynthesis via DXP pathway; isopentenyl diphosphate from 1-deoxy-D-xylulose 5-phosphate: step 3/6. In terms of biological role, catalyzes the phosphorylation of the position 2 hydroxy group of 4-diphosphocytidyl-2C-methyl-D-erythritol. The sequence is that of 4-diphosphocytidyl-2-C-methyl-D-erythritol kinase from Helicobacter pylori (strain HPAG1).